A 97-amino-acid polypeptide reads, in one-letter code: MKLRPLHDRVVIRRSEEESKTAGGIVLPGSAAEKPNRGEVVAVGTGRVLDNGEVRALAVKVGDKVVFGPYSGSNTVKVDGEDLLVMAENEILAVVEG.

Belongs to the GroES chaperonin family. In terms of assembly, heptamer of 7 subunits arranged in a ring. Interacts with the chaperonin GroEL.

The protein localises to the cytoplasm. Together with the chaperonin GroEL, plays an essential role in assisting protein folding. The GroEL-GroES system forms a nano-cage that allows encapsulation of the non-native substrate proteins and provides a physical environment optimized to promote and accelerate protein folding. GroES binds to the apical surface of the GroEL ring, thereby capping the opening of the GroEL channel. This is Co-chaperonin GroES from Pseudomonas putida (strain ATCC 700007 / DSM 6899 / JCM 31910 / BCRC 17059 / LMG 24140 / F1).